Reading from the N-terminus, the 296-residue chain is MLKGSIVALVTPFTKYGNVDYSELEFLVNKHCEAGTDAIVAVGTTGESTTLTHEEHIAVVNAMVELSAGRIDIIAGNGSNSTSEAVQLTEKMTQAGVSGFLNVTPYYNKPSLAGLIAHYQACADATDKPQILYNVPGRTSLDMTPDMVEQLAKIDNVIGIKEATGDVSRVQELKERCGDDFILLSGDDPTAREFMFAGGHGVISVTANIVPAKMKELVTAALAGDKESANQIDAELAPLHNMLFVESNPIPVKWSLALMGWVSANYRLPLTPPEESNQQLIESVLQKANLLNIQES.

Threonine 45 is a binding site for pyruvate. Residue tyrosine 133 is the Proton donor/acceptor of the active site. Lysine 161 functions as the Schiff-base intermediate with substrate in the catalytic mechanism. Pyruvate is bound at residue isoleucine 203.

The protein belongs to the DapA family. In terms of assembly, homotetramer; dimer of dimers.

Its subcellular location is the cytoplasm. The catalysed reaction is L-aspartate 4-semialdehyde + pyruvate = (2S,4S)-4-hydroxy-2,3,4,5-tetrahydrodipicolinate + H2O + H(+). The protein operates within amino-acid biosynthesis; L-lysine biosynthesis via DAP pathway; (S)-tetrahydrodipicolinate from L-aspartate: step 3/4. Catalyzes the condensation of (S)-aspartate-beta-semialdehyde [(S)-ASA] and pyruvate to 4-hydroxy-tetrahydrodipicolinate (HTPA). This Idiomarina loihiensis (strain ATCC BAA-735 / DSM 15497 / L2-TR) protein is 4-hydroxy-tetrahydrodipicolinate synthase.